A 239-amino-acid chain; its full sequence is 7-cyano-7-deazaguanine synthase (239 aa).

13 to 23 lines the ATP pocket; the sequence is LSGGLDSMVTA. Residues Cys193, Cys203, Cys206, and Cys209 each contribute to the Zn(2+) site.

The protein belongs to the QueC family. It depends on Zn(2+) as a cofactor.

The enzyme catalyses 7-carboxy-7-deazaguanine + NH4(+) + ATP = 7-cyano-7-deazaguanine + ADP + phosphate + H2O + H(+). It functions in the pathway purine metabolism; 7-cyano-7-deazaguanine biosynthesis. Catalyzes the ATP-dependent conversion of 7-carboxy-7-deazaguanine (CDG) to 7-cyano-7-deazaguanine (preQ(0)). The protein is 7-cyano-7-deazaguanine synthase of Erythrobacter litoralis (strain HTCC2594).